A 63-amino-acid polypeptide reads, in one-letter code: MGSLSMWHWLIVLVIVLLLFGRGKIPELMGDVAKGIKSFKKGMTDEDAPETAKTVDHKADETK.

The helical transmembrane segment at Met-1–Gly-21 threads the bilayer. Residues Met-43–Lys-63 are disordered. The segment covering Lys-53–Lys-63 has biased composition (basic and acidic residues).

Belongs to the TatA/E family. As to quaternary structure, the Tat system comprises two distinct complexes: a TatABC complex, containing multiple copies of TatA, TatB and TatC subunits, and a separate TatA complex, containing only TatA subunits. Substrates initially bind to the TatABC complex, which probably triggers association of the separate TatA complex to form the active translocon.

Its subcellular location is the cell inner membrane. In terms of biological role, part of the twin-arginine translocation (Tat) system that transports large folded proteins containing a characteristic twin-arginine motif in their signal peptide across membranes. TatA could form the protein-conducting channel of the Tat system. The polypeptide is Sec-independent protein translocase protein TatA (Rhizobium etli (strain ATCC 51251 / DSM 11541 / JCM 21823 / NBRC 15573 / CFN 42)).